The primary structure comprises 806 residues: Ribonucleoside-diphosphate reductase large subunit (806 aa).

The 91-residue stretch at 1–91 (MYVLNRKGEE…TDNLHKNTSD (91 aa)) folds into the ATP-cone domain. Residues 5 to 6 (NR), 11 to 17 (EDISFDQ), Thr-52, and Asp-56 contribute to the ATP site. Ser-215 lines the GDP pocket. A disulfide bridge links Cys-216 with Cys-442. Residues 224–226 (DSI), Lys-241, Arg-254, and 261–262 (RG) each bind dTTP. Asn-425 lines the GDP pocket. The Proton acceptor role is filled by Asn-425. Catalysis depends on Cys-427, which acts as the Cysteine radical intermediate. GDP is bound by residues Glu-429 and 604-607 (TAST). The active-site Proton acceptor is the Glu-429.

Belongs to the ribonucleoside diphosphate reductase large chain family. In terms of assembly, heterodimer of a large and a small subunit.

The enzyme catalyses a 2'-deoxyribonucleoside 5'-diphosphate + [thioredoxin]-disulfide + H2O = a ribonucleoside 5'-diphosphate + [thioredoxin]-dithiol. Under complex allosteric control mediated by deoxynucleoside triphosphates and ATP binding to separate specificity and activation sites on the large subunit. The type of nucleotide bound at the specificity site determines substrate preference. It seems probable that ATP makes the enzyme reduce CDP and UDP, dGTP favors ADP reduction and dTTP favors GDP reduction. Stimulated by ATP and inhibited by dATP binding to the activity site. Provides the precursors necessary for DNA synthesis. Catalyzes the biosynthesis of deoxyribonucleotides from the corresponding ribonucleotides. The sequence is that of Ribonucleoside-diphosphate reductase large subunit (RNR1) from Plasmodium falciparum (isolate Dd2).